A 62-amino-acid chain; its full sequence is Large ribosomal subunit protein eL24 (62 aa).

4 residues coordinate Zn(2+): cysteine 6, cysteine 9, cysteine 32, and cysteine 36. A C4-type zinc finger spans residues cysteine 6–cysteine 36.

The protein belongs to the eukaryotic ribosomal protein eL24 family. Part of the 50S ribosomal subunit. Forms a cluster with proteins L3 and L14. Zn(2+) serves as cofactor.

Binds to the 23S rRNA. The chain is Large ribosomal subunit protein eL24 from Methanococcus maripaludis (strain C5 / ATCC BAA-1333).